A 155-amino-acid polypeptide reads, in one-letter code: UPF0260 protein Smed_0627 (155 aa).

The protein belongs to the UPF0260 family.

In Sinorhizobium medicae (strain WSM419) (Ensifer medicae), this protein is UPF0260 protein Smed_0627.